The primary structure comprises 273 residues: Formamidopyrimidine-DNA glycosylase (273 aa).

Pro-2 functions as the Schiff-base intermediate with DNA in the catalytic mechanism. Glu-3 serves as the catalytic Proton donor. The active-site Proton donor; for beta-elimination activity is the Lys-58. His-92, Arg-111, and Lys-153 together coordinate DNA. An FPG-type zinc finger spans residues 238-272 (MVYARDGQECLSCSSSIIKTKHSGRSTFYCKSCQK). Arg-262 (proton donor; for delta-elimination activity) is an active-site residue.

This sequence belongs to the FPG family. Monomer. The cofactor is Zn(2+).

The enzyme catalyses Hydrolysis of DNA containing ring-opened 7-methylguanine residues, releasing 2,6-diamino-4-hydroxy-5-(N-methyl)formamidopyrimidine.. It catalyses the reaction 2'-deoxyribonucleotide-(2'-deoxyribose 5'-phosphate)-2'-deoxyribonucleotide-DNA = a 3'-end 2'-deoxyribonucleotide-(2,3-dehydro-2,3-deoxyribose 5'-phosphate)-DNA + a 5'-end 5'-phospho-2'-deoxyribonucleoside-DNA + H(+). Involved in base excision repair of DNA damaged by oxidation or by mutagenic agents. Acts as a DNA glycosylase that recognizes and removes damaged bases. Has a preference for oxidized purines, such as 7,8-dihydro-8-oxoguanine (8-oxoG). Has AP (apurinic/apyrimidinic) lyase activity and introduces nicks in the DNA strand. Cleaves the DNA backbone by beta-delta elimination to generate a single-strand break at the site of the removed base with both 3'- and 5'-phosphates. This is Formamidopyrimidine-DNA glycosylase from Rickettsia bellii (strain OSU 85-389).